The chain runs to 92 residues: MANSAQARKRARQAAKANSHNSALRSKFRTAIKAVRKAIDAGDKAKAAEIFQASSKTIDIIADKNIVHKNKAARHKSRLAAAIKGLQASAAQ.

The interval 1–25 is disordered; that stretch reads MANSAQARKRARQAAKANSHNSALR.

It belongs to the bacterial ribosomal protein bS20 family.

In terms of biological role, binds directly to 16S ribosomal RNA. This chain is Small ribosomal subunit protein bS20, found in Paraburkholderia phytofirmans (strain DSM 17436 / LMG 22146 / PsJN) (Burkholderia phytofirmans).